A 237-amino-acid chain; its full sequence is Uridylate kinase (237 aa).

11-14 (KLSG) contacts ATP. UMP is bound at residue G52. ATP-binding residues include G53 and R57. UMP is bound by residues D72 and 134-141 (TGYSYFTT). N162, Y168, and D171 together coordinate ATP.

This sequence belongs to the UMP kinase family. As to quaternary structure, homohexamer.

The protein resides in the cytoplasm. It catalyses the reaction UMP + ATP = UDP + ADP. Its pathway is pyrimidine metabolism; CTP biosynthesis via de novo pathway; UDP from UMP (UMPK route): step 1/1. With respect to regulation, inhibited by UTP. In terms of biological role, catalyzes the reversible phosphorylation of UMP to UDP. The sequence is that of Uridylate kinase from Mycoplasma capricolum subsp. capricolum (strain California kid / ATCC 27343 / NCTC 10154).